We begin with the raw amino-acid sequence, 260 residues long: Metallo-beta-lactamase domain-containing protein 1 (260 aa).

Residues His118, His120, Asp122, His123, His173, Asp196, and His235 each contribute to the Zn(2+) site.

The protein belongs to the metallo-beta-lactamase superfamily. Glyoxalase II family. Homodimer. Requires Zn(2+) as cofactor.

The protein resides in the cytoplasm. Its subcellular location is the cytosol. It localises to the nucleus. The enzyme catalyses a ribonucleotidyl-ribonucleotide-RNA + H2O = a 3'-end ribonucleotide-RNA + a 5'-end 5'-phospho-ribonucleoside-RNA + H(+). In terms of biological role, endoribonuclease that catalyzes the hydrolysis of histone-coding pre-mRNA 3'-end. Involved in histone pre-mRNA processing during the S-phase of the cell cycle, which is required for entering/progressing through S-phase. Cleaves histone pre-mRNA at a major and a minor cleavage site after the 5'-ACCCA-3' and the 5'-ACCCACA-3' sequence, respectively, and located downstream of the stem-loop. May require the presence of the HDE element located at the histone pre-RNA 3'-end to avoid non-specific cleavage. This Mus musculus (Mouse) protein is Metallo-beta-lactamase domain-containing protein 1.